A 462-amino-acid polypeptide reads, in one-letter code: ESX-1 secretion system protein EccE1 (462 aa).

The next 2 membrane-spanning stretches (helical) occupy residues 9-29 (FSTG…IAFL) and 34-54 (WWAG…TFYG).

Belongs to the EccE family. Part of the ESX-1 / type VII secretion system (T7SS), which is composed of cytosolic and membrane components. The ESX-1 membrane complex is composed of EccB1, EccCa1, EccCb1, EccD1 and EccE1.

The protein resides in the cell inner membrane. Its function is as follows. Part of the ESX-1 specialized secretion system, which delivers several virulence factors to host cells during infection, including the key virulence factors EsxA (ESAT-6) and EsxB (CFP-10). The chain is ESX-1 secretion system protein EccE1 from Mycobacterium tuberculosis (strain CDC 1551 / Oshkosh).